Here is a 2194-residue protein sequence, read N- to C-terminus: Nucleosome-remodeling factor subunit NURF301-like (2194 aa).

Residues M1–H12 show a composition bias toward basic residues. Residues M1–F137 are disordered. Residues A60–S79 show a composition bias toward basic and acidic residues. A compositionally biased stretch (polar residues) spans V80–T93. Residues S94 to L112 are compositionally biased toward basic residues. Acidic residues predominate over residues D118–F137. DDT domains lie at T196–E256 and V341–R396. Residues D347–N392 form a PHD-type 1 zinc finger. Disordered regions lie at residues E1091–N1122, A1158–N1255, T1413–S1433, M1657–S1701, and E1834–G1888. The stretch at R1151–S1187 forms a coiled coil. A compositionally biased stretch (basic and acidic residues) spans A1158–R1179. The span at T1665–T1684 shows a compositional bias: polar residues. The span at K1852 to E1861 shows a compositional bias: basic and acidic residues. DDT domains are found at residues A1883–R1953 and I1948–Y2014. 2 PHD-type zinc fingers span residues I1899 to E1950 and A1959 to E2010. In terms of domain architecture, Bromo spans Q2030–V2134.

Belongs to the BPTF family. Part of a nucleosome remodeling factor-like (NURF-like) complex containing nurf-1 and isw-1.

Its subcellular location is the nucleus. Histone-binding component of a NURF-like (nucleosome remodeling factor-like) complex, which would catalyze ATP-dependent nucleosome sliding and facilitate transcription of chromatin. Involved in vulval cell fates. This chain is Nucleosome-remodeling factor subunit NURF301-like (nurf-1), found in Caenorhabditis elegans.